The following is an 89-amino-acid chain: Small ribosomal subunit protein uS19 (89 aa).

It belongs to the universal ribosomal protein uS19 family.

Its function is as follows. Protein S19 forms a complex with S13 that binds strongly to the 16S ribosomal RNA. The chain is Small ribosomal subunit protein uS19 from Akkermansia muciniphila (strain ATCC BAA-835 / DSM 22959 / JCM 33894 / BCRC 81048 / CCUG 64013 / CIP 107961 / Muc).